The chain runs to 350 residues: uncharacterized protein (350 aa).

Disordered regions lie at residues 1–21 (MDSF…SSLN), 237–266 (NSDV…PISP), and 278–298 (EMST…KKRT). 2 stretches are compositionally biased toward polar residues: residues 10 to 21 (KPTTATSNSSLN) and 246 to 259 (EDSS…TKPS). Residues 287–298 (SRSRTPSSKKRT) are compositionally biased toward basic residues.

Its subcellular location is the nucleus. This is an uncharacterized protein from Schizosaccharomyces pombe (strain 972 / ATCC 24843) (Fission yeast).